We begin with the raw amino-acid sequence, 503 residues long: GMP synthase [glutamine-hydrolyzing] (503 aa).

A Glutamine amidotransferase type-1 domain is found at 1-189; sequence MVLVLDFGSQ…FLELAGAKRD (189 aa). Catalysis depends on C78, which acts as the Nucleophile. Active-site residues include H164 and E166. The GMPS ATP-PPase domain maps to 190 to 378; that stretch reads WTPEHVLEEL…LGLPDTLRLR (189 aa). 217–223 provides a ligand contact to ATP; the sequence is SGGVDSS.

Homodimer.

It carries out the reaction XMP + L-glutamine + ATP + H2O = GMP + L-glutamate + AMP + diphosphate + 2 H(+). It functions in the pathway purine metabolism; GMP biosynthesis; GMP from XMP (L-Gln route): step 1/1. Catalyzes the synthesis of GMP from XMP. This is GMP synthase [glutamine-hydrolyzing] from Thermus thermophilus (strain ATCC BAA-163 / DSM 7039 / HB27).